A 118-amino-acid chain; its full sequence is Developmental pluripotency-associated protein 5A (118 aa).

The region spanning 24–86 is the KH; atypical domain; sequence PEVFQVQSLV…NNKIRAKWML (63 aa).

The protein belongs to the KHDC1 family.

It localises to the cytoplasm. Involved in the maintenance of embryonic stem (ES) cell pluripotency. Dispensable for self-renewal of pluripotent ES cells and establishment of germ cells. Associates with specific target mRNAs. The sequence is that of Developmental pluripotency-associated protein 5A (Dppa5a) from Mus musculus (Mouse).